A 698-amino-acid polypeptide reads, in one-letter code: Voltage-dependent calcium channel beta subunit-associated regulatory protein (698 aa).

Topologically, residues 1-41 (MQPTATMATAAATTATVALTTSWDNATSRPTAEPDPILDNY) are extracellular. Residue Asn25 is glycosylated (N-linked (GlcNAc...) asparagine). Residues 42-62 (VLLVVVMSLFVGGTLVVLSGV) form a helical; Signal-anchor for type III membrane protein membrane-spanning segment. At 63 to 698 (LLLCKRCWEV…APTSPDHSPA (636 aa)) the chain is on the cytoplasmic side. Disordered regions lie at residues 90–124 (YLDNGTHPIQDPDCRGEDPEGQDTETERFLATSST) and 185–275 (ASAA…SSGS). Low complexity predominate over residues 185-197 (ASAAATPHPATTS). Phosphoserine occurs at positions 290 and 295. Disordered regions lie at residues 308–339 (SQRASSLDTRGSPKRHHFQRQRAASESMEQEG), 360–421 (PPPR…HAQC), 438–536 (ATAS…RRDY), and 554–648 (PHFD…GSGL). The span at 360–375 (PPPRPFLASPTSPPPT) shows a compositional bias: pro residues. Over residues 402–413 (PEHAQQQDPQQE) the composition is skewed to low complexity. The span at 459-468 (SGSGSGGGGA) shows a compositional bias: gly residues. Over residues 471–482 (AFPPPPESPPAL) the composition is skewed to pro residues. Residues 483-493 (RPKDGEARRLL) are compositionally biased toward basic and acidic residues. 3 positions are modified to phosphoserine: Ser501, Ser520, and Ser524. Over residues 562-576 (HRTRAHPHTHARKQW) the composition is skewed to basic residues. Ser610 carries the phosphoserine modification. Position 691 is a phosphothreonine (Thr691). Ser692 and Ser696 each carry phosphoserine.

Interacts with voltage-dependent calcium channels CACNB1, CACNB2, CACNB3 and CACNB4 beta subunits; prevents their interaction with the CACNA1C alpha subunit thereby negatively regulating the activity of the corresponding calcium channels. As to expression, expressed by neurons in the cortex, cerebellum and hippocampus and by pancreatic beta cells (at protein level).

Its subcellular location is the cytoplasmic vesicle. It is found in the secretory vesicle. The protein resides in the synaptic vesicle membrane. It localises to the cell membrane. The protein localises to the cell projection. Its subcellular location is the growth cone. Negatively regulates voltage-gated calcium channels by preventing the interaction between their alpha and beta subunits. Thereby, negatively regulates calcium channels activity at the plasma membrane and indirectly inhibits calcium-regulated exocytosis. This is Voltage-dependent calcium channel beta subunit-associated regulatory protein from Mus musculus (Mouse).